A 217-amino-acid polypeptide reads, in one-letter code: Choline transport system permease protein OpuBB (217 aa).

One can recognise an ABC transmembrane type-1 domain in the interval 19-198 (TYEHITISLI…ILAIVIDYVL (180 aa)). 6 consecutive transmembrane segments (helical) span residues 23 to 43 (ITIS…LGVV), 52 to 74 (GTII…AFFI), 84 to 101 (AIVA…RNTY), 128 to 148 (LVEL…STIY), 150 to 170 (IGWA…YIFI), and 180 to 200 (IIGG…VLAV).

It belongs to the binding-protein-dependent transport system permease family. CysTW subfamily.

It is found in the cell membrane. Involved in a high affinity multicomponent binding-protein-dependent transport system for choline; probably responsible for the translocation of the substrate across the membrane. This chain is Choline transport system permease protein OpuBB (opuBB), found in Bacillus subtilis (strain 168).